We begin with the raw amino-acid sequence, 166 residues long: Sec-independent protein translocase protein TatB (166 aa).

A helical transmembrane segment spans residues 2 to 22 (FDGIGFMELLLIGVLGLVVLG). The tract at residues 69–166 (SKGLSNLSPE…DTRSNPKANG (98 aa)) is disordered. Composition is skewed to polar residues over residues 88–97 (QAAQSVNRPY) and 112–132 (QIHS…SQAN). Residues 133–153 (PTATVEASPTSASPATPSEPS) are compositionally biased toward low complexity. A compositionally biased stretch (polar residues) spans 155–166 (GADTRSNPKANG).

Belongs to the TatB family. In terms of assembly, the Tat system comprises two distinct complexes: a TatABC complex, containing multiple copies of TatA, TatB and TatC subunits, and a separate TatA complex, containing only TatA subunits. Substrates initially bind to the TatABC complex, which probably triggers association of the separate TatA complex to form the active translocon.

The protein resides in the cell inner membrane. Functionally, part of the twin-arginine translocation (Tat) system that transports large folded proteins containing a characteristic twin-arginine motif in their signal peptide across membranes. Together with TatC, TatB is part of a receptor directly interacting with Tat signal peptides. TatB may form an oligomeric binding site that transiently accommodates folded Tat precursor proteins before their translocation. The protein is Sec-independent protein translocase protein TatB of Shewanella baltica (strain OS223).